The chain runs to 269 residues: Hydroxyethylthiazole kinase (269 aa).

Substrate is bound at residue M42. Residues R118 and S164 each contribute to the ATP site. Residue G191 coordinates substrate.

This sequence belongs to the Thz kinase family. Mg(2+) is required as a cofactor.

The catalysed reaction is 5-(2-hydroxyethyl)-4-methylthiazole + ATP = 4-methyl-5-(2-phosphooxyethyl)-thiazole + ADP + H(+). The protein operates within cofactor biosynthesis; thiamine diphosphate biosynthesis; 4-methyl-5-(2-phosphoethyl)-thiazole from 5-(2-hydroxyethyl)-4-methylthiazole: step 1/1. Its function is as follows. Catalyzes the phosphorylation of the hydroxyl group of 4-methyl-5-beta-hydroxyethylthiazole (THZ). This is Hydroxyethylthiazole kinase from Listeria monocytogenes serotype 4b (strain F2365).